We begin with the raw amino-acid sequence, 527 residues long: GMP synthase [glutamine-hydrolyzing] (527 aa).

Residues 20 to 208 (SVVILDYGSQ…LFDVCGCAPT (189 aa)) form the Glutamine amidotransferase type-1 domain. Residue cysteine 97 is the Nucleophile of the active site. Catalysis depends on residues histidine 182 and glutamate 184. The 194-residue stretch at 209–402 (WTAESFVEQA…LGLPEEIVQR (194 aa)) folds into the GMPS ATP-PPase domain. ATP is bound at residue 236 to 242 (SGGVDSS).

In terms of assembly, homodimer.

It carries out the reaction XMP + L-glutamine + ATP + H2O = GMP + L-glutamate + AMP + diphosphate + 2 H(+). Its pathway is purine metabolism; GMP biosynthesis; GMP from XMP (L-Gln route): step 1/1. Catalyzes the synthesis of GMP from XMP. The sequence is that of GMP synthase [glutamine-hydrolyzing] from Thermomicrobium roseum (strain ATCC 27502 / DSM 5159 / P-2).